The primary structure comprises 206 residues: Ribosomal RNA large subunit methyltransferase E (206 aa).

G60, W62, D80, D96, and D121 together coordinate S-adenosyl-L-methionine. The active-site Proton acceptor is the K161.

The protein belongs to the class I-like SAM-binding methyltransferase superfamily. RNA methyltransferase RlmE family.

It is found in the cytoplasm. It catalyses the reaction uridine(2552) in 23S rRNA + S-adenosyl-L-methionine = 2'-O-methyluridine(2552) in 23S rRNA + S-adenosyl-L-homocysteine + H(+). Functionally, specifically methylates the uridine in position 2552 of 23S rRNA at the 2'-O position of the ribose in the fully assembled 50S ribosomal subunit. This chain is Ribosomal RNA large subunit methyltransferase E, found in Francisella tularensis subsp. novicida (strain U112).